Consider the following 130-residue polypeptide: Methylglyoxal synthase (130 aa).

In terms of domain architecture, MGS-like spans 1–130 (MSKPRIALIA…DLARTMQDVC (130 aa)). Substrate-binding positions include histidine 11, lysine 15, 37–40 (TGTT), and 57–58 (SG). Residue aspartate 63 is the Proton donor/acceptor of the active site. Histidine 90 serves as a coordination point for substrate.

This sequence belongs to the methylglyoxal synthase family.

It catalyses the reaction dihydroxyacetone phosphate = methylglyoxal + phosphate. Functionally, catalyzes the formation of methylglyoxal from dihydroxyacetone phosphate. This is Methylglyoxal synthase from Burkholderia multivorans (strain ATCC 17616 / 249).